The following is a 1351-amino-acid chain: Serine-rich adhesin for platelets (1351 aa).

The first 89 residues, 1–89, serve as a signal peptide directing secretion; sequence MSKRQKEFHD…VNMLHDQQAF (89 aa). Residues 90–230 are serine-rich repeat region 1, SRR1; that stretch reads AASDAPLTSE…KTSTTSTSTA (141 aa). Over residues 100 to 111 the composition is skewed to polar residues; it reads LNTQSETVGNQN. Disordered regions lie at residues 100–228 and 751–1323; these read LNTQ…TSTS and NSMS…GLLG. 2 stretches are compositionally biased toward low complexity: residues 112–133 and 149–228; these read STTI…NSSS and NVTS…TSTS. Residues 231 to 751 form a non-repeat region (NRR) region; it reads PIKLRTFSRL…TTFKYEVTRN (521 aa). Over residues 752–1294 the composition is skewed to low complexity; sequence SMSDSVSTSG…SQSTLSATSE (543 aa). Residues 752–1312 are serine-rich repeat region 1, SRR1; it reads SMSDSVSTSG…AQSEKRLPDT (561 aa). The LPXTG sorting signal motif lies at 1309-1313; it reads LPDTG. Residue T1312 is modified to Pentaglycyl murein peptidoglycan amidated threonine. A propeptide spans 1313 to 1351 (removed by sortase); it reads GDSIKQNGLLGGVMTLLVGLGLMKRKKKKDENDQDDSQA.

The protein belongs to the serine-rich repeat protein (SRRP) family. In terms of processing, proteolytically cleaved by a metalloprotease. Glycosylated. It is probable that most of the Ser residues in SSR1 and SSR2 are O-GlcNAcylated. Sequential glycosylation by sugar transferases are able to generate complex sugar polymorphisms.

Its subcellular location is the secreted. The protein resides in the cell wall. Mediates binding to human platelets, possibly through a receptor-ligand interaction. Probably associated with virulence in endovascular infection. This is Serine-rich adhesin for platelets (sasA) from Staphylococcus aureus (strain MRSA252).